The following is a 188-amino-acid chain: Pro-adrenomedullin (188 aa).

The N-terminal stretch at 1–21 (MKLVPVALLYLGSLAFLGADT) is a signal peptide. An Arginine amide modification is found at Arg-41. The propeptide occupies 45–92 (ELRVSSSYPTGLAEVKAGPAQTLIRTQDVKGASRNPQTSGPDAARIRV). An intrachain disulfide couples Cys-110 to Cys-115. A disordered region spans residues 131–176 (DKDGVAPRSKISPQGYGRRRRRSLPEPGLRRTLLFPEPRPGGAPAP). A Tyrosine amide modification is found at Tyr-146. Positions 153–188 (SLPEPGLRRTLLFPEPRPGGAPAPRAHQVLANLLKM) are cleaved as a propeptide — preproAM C-terminal fragment.

Belongs to the adrenomedullin family.

The protein resides in the secreted. Its function is as follows. Adrenomedullin/ADM and proadrenomedullin N-20 terminal peptide/PAMP are peptide hormones that act as potent hypotensive and vasodilatator agents. Numerous actions have been reported most related to the physiologic control of fluid and electrolyte homeostasis. Functionally, ADM function is mediated by the CALCRL-RAMP2 and CALCRL-RAMP3 receptor complexes with ADM showing the highest potency for the CALCRL-RAMP2 complex. The polypeptide is Pro-adrenomedullin (ADM) (Canis lupus familiaris (Dog)).